Reading from the N-terminus, the 323-residue chain is GTP 3',8-cyclase (323 aa).

One can recognise a Radical SAM core domain in the interval 4-226 (TFQRQINYLR…LEPFPDLATN (223 aa)). GTP is bound at residue Arg13. Cys20 and Cys24 together coordinate [4Fe-4S] cluster. Tyr26 provides a ligand contact to S-adenosyl-L-methionine. A [4Fe-4S] cluster-binding site is contributed by Cys27. A GTP-binding site is contributed by Arg63. Gly67 is a binding site for S-adenosyl-L-methionine. Thr94 is a GTP binding site. Residue Ser118 coordinates S-adenosyl-L-methionine. Lys155 is a GTP binding site. Met189 provides a ligand contact to S-adenosyl-L-methionine. [4Fe-4S] cluster is bound by residues Cys252 and Cys255. 257–259 (RLR) is a GTP binding site. Cys269 contributes to the [4Fe-4S] cluster binding site.

Belongs to the radical SAM superfamily. MoaA family. As to quaternary structure, monomer and homodimer. It depends on [4Fe-4S] cluster as a cofactor.

The enzyme catalyses GTP + AH2 + S-adenosyl-L-methionine = (8S)-3',8-cyclo-7,8-dihydroguanosine 5'-triphosphate + 5'-deoxyadenosine + L-methionine + A + H(+). It functions in the pathway cofactor biosynthesis; molybdopterin biosynthesis. Its function is as follows. Catalyzes the cyclization of GTP to (8S)-3',8-cyclo-7,8-dihydroguanosine 5'-triphosphate. The protein is GTP 3',8-cyclase of Moorella thermoacetica (strain ATCC 39073 / JCM 9320).